The sequence spans 84 residues: Envelope glycoprotein N (84 aa).

The first 26 residues, 1 to 26, serve as a signal peptide directing secretion; that stretch reads MSCKKSARQSLYVSLCLFYILVFAAA. Topologically, residues 27–47 are virion surface; it reads TEVDFYSPECHSHTYEIVLNS. The helical transmembrane segment at 48-68 threads the bilayer; that stretch reads FSSIWLLINLFLLLCSFAIFL. The Intravirion portion of the chain corresponds to 69–84; the sequence is KYWCYKTFASETVKGY.

It belongs to the herpesviridae glycoprotein N family. As to quaternary structure, interacts (via N-terminus) with gM (via N-terminus). The gM-gN heterodimer forms the gCII complex.

The protein resides in the virion membrane. It is found in the host membrane. It localises to the host Golgi apparatus. The protein localises to the host trans-Golgi network. Its function is as follows. Envelope glycoprotein necessary for proper maturation of gM and modulation of its membrane fusion activity. Also plays a critical role in virion morphogenesis. The chain is Envelope glycoprotein N from Homo sapiens (Human).